Consider the following 232-residue polypeptide: MNSPLSYNNVIEVTDLQRAFKQGEHEIQILRGIDLIVRRGEILALLGPSGAGKSTFLQAIGLLENGFTGSINILGQEIGSLNDKERTAIRRDHLGFVYQFHHLLPDFSALENVMLPQLIQGKSPHQAKEHAHFLLNSLKLEERLKHYPSQLSGGEQQRVAVARALANRPALVLADEPTGNLDEATGDIVLHEFLRLVRRQGSAAIIATHNMAMARKMDRIVTLHDGRLIEEY.

The region spanning 11–232 (IEVTDLQRAF…LHDGRLIEEY (222 aa)) is the ABC transporter domain. Residue 47 to 54 (GPSGAGKS) participates in ATP binding.

Belongs to the ABC transporter superfamily. Lipoprotein translocase (TC 3.A.1.125) family. As to quaternary structure, the complex is composed of two ATP-binding proteins (LolD) and two transmembrane proteins (LolC and LolE).

It is found in the cell inner membrane. Part of the ABC transporter complex LolCDE involved in the translocation of mature outer membrane-directed lipoproteins, from the inner membrane to the periplasmic chaperone, LolA. Responsible for the formation of the LolA-lipoprotein complex in an ATP-dependent manner. The chain is Lipoprotein-releasing system ATP-binding protein LolD from Zymomonas mobilis subsp. mobilis (strain ATCC 31821 / ZM4 / CP4).